The following is a 137-amino-acid chain: Histone H2B.1, sperm (137 aa).

Residues 1 to 43 (MPSQKSPTKRSPTKRSPQKGGKGAKRGGKAGKRRRGVAVKRRR) are disordered. Short sequence motifs (SPKK motif) lie at residues 6–9 (SPTK), 11–14 (SPTK), and 16–19 (SPQK). A compositionally biased stretch (basic residues) spans 7–43 (PTKRSPTKRSPQKGGKGAKRGGKAGKRRRGVAVKRRR). Residues serine 11 and serine 16 each carry the phosphoserine modification. Residue serine 124 is glycosylated (O-linked (GlcNAc) serine). Lysine 132 is covalently cross-linked (Glycyl lysine isopeptide (Lys-Gly) (interchain with G-Cter in ubiquitin)).

Belongs to the histone H2B family. As to quaternary structure, the nucleosome is a histone octamer containing two molecules each of H2A, H2B, H3 and H4 assembled in one H3-H4 heterotetramer and two H2A-H2B heterodimers. The octamer wraps approximately 147 bp of DNA. Post-translationally, monoubiquitination of Lys-132 gives a specific tag for epigenetic transcriptional activation and is also prerequisite for histone H3 'Lys-4' and 'Lys-79' methylation. Phosphorylated on SPKK motifs 2 and 3; which may regulate DNA binding. Dephosphorylated during maturation of spermatids to mature sperm and rephosphorylated at fertilization. In terms of processing, glcNAcylation at Ser-124 promotes monoubiquitination of Lys-132. It fluctuates in response to extracellular glucose, and associates with transcribed genes.

The protein localises to the nucleus. Its subcellular location is the chromosome. Functionally, core component of nucleosome. Nucleosomes wrap and compact DNA into chromatin, limiting DNA accessibility to the cellular machineries which require DNA as a template. Histones thereby play a central role in transcription regulation, DNA repair, DNA replication and chromosomal stability. DNA accessibility is regulated via a complex set of post-translational modifications of histones, also called histone code, and nucleosome remodeling. The sequence is that of Histone H2B.1, sperm from Psammechinus miliaris (Green sea urchin).